Consider the following 2382-residue polypeptide: Nonribosomal peptide synthetase chyA (2382 aa).

The adenylation 1 stretch occupies residues 204 to 607 (QKCATQPESI…LGRKDHQVKI (404 aa)). The Carrier 1 domain occupies 745 to 821 (TPTTQNQRIL…DMASVLVKDH (77 aa)). Ser-782 bears the O-(pantetheine 4'-phosphoryl)serine mark. The tract at residues 857–1269 (EDVYPCTHMQ…LVPPEDMATL (413 aa)) is condensation 1. The interval 1294–1687 (GQPDTLAIHS…VGRKDDQVKL (394 aa)) is adenylation 2. The Carrier 2 domain maps to 1833-1909 (VPVSIHGRKV…GLSLKCATEN (77 aa)). Ser-1870 is subject to O-(pantetheine 4'-phosphoryl)serine. The segment at 1967-2373 (MTLHNFYSRY…FSDVIESLAS (407 aa)) is condensation 2.

The protein belongs to the NRP synthetase family.

It functions in the pathway pigment biosynthesis. Its function is as follows. Nonribosomal peptide synthetase; part of the gene cluster that mediates the biosynthesis of the yellow pigment chrysogine. the NRPS chyA mediates the condensation of anthranilic acid and alanine into the intermediate 2-(2-aminopropanamido)benzoic acid. The remainder of the pathway is highly branched yielding at least 13 chrysogine-related compounds. The malonyl transferase chyE converts 2-(2-aminopropanamido)benzoic acid and 2-(2-aminopropanamido)benzamidine into 2-(2-(2-carboxyacetamido)propanamido)benzoic acid and 3-((1-((2-carbamoylphenyl)amino)-1-oxopropan-2-yl)amino)-3-oxopropanoic acid, respectively. ChyD is an amidase, being responsible for the amidation of the carboxylic acid moiety of 2-(2-aminopropanamido)benzoic acid, 2-(2-(2-carboxyacetamido)propanamido)benzoic acid and 2-(2-((4-amino-1-carboxy-4-oxobutyl)amino)propanamido)benzoic acid. ChyC is involved in the same reactions as ChyD, but plays a more minor role in the amidation reactions compared to chyD. The oxidoreductases chyH and chyM are involved in oxidation reactions that form N-pyruvoylanthranilamide from 2-(2-aminopropanamido)benzamidine and (1-((2-carbamoylphenyl)amino)-1-oxopropan-2-yl)glutamine, respectively. N-pyruvoylanthranilamide is further converted via two further branches in the pathway, yielding chrysogine and additional chrysogine-related coumpounds. Chrysogine is likely formed by a spontaneous ring closure from N-pyruvoylanthranilamide. In Penicillium rubens (strain ATCC 28089 / DSM 1075 / NRRL 1951 / Wisconsin 54-1255) (Penicillium chrysogenum), this protein is Nonribosomal peptide synthetase chyA.